The primary structure comprises 387 residues: Alkanesulfonate monooxygenase (387 aa).

This sequence belongs to the SsuD family.

It catalyses the reaction an alkanesulfonate + FMNH2 + O2 = an aldehyde + FMN + sulfite + H2O + 2 H(+). Catalyzes the desulfonation of aliphatic sulfonates. This is Alkanesulfonate monooxygenase from Xanthomonas axonopodis pv. citri (strain 306).